We begin with the raw amino-acid sequence, 315 residues long: Acetyl-coenzyme A carboxylase carboxyl transferase subunit alpha (315 aa).

The region spanning 32–289 (EIDMLEASLE…KEAFTKQLSE (258 aa)) is the CoA carboxyltransferase C-terminal domain.

This sequence belongs to the AccA family. In terms of assembly, acetyl-CoA carboxylase is a heterohexamer composed of biotin carboxyl carrier protein (AccB), biotin carboxylase (AccC) and two subunits each of ACCase subunit alpha (AccA) and ACCase subunit beta (AccD).

It is found in the cytoplasm. It carries out the reaction N(6)-carboxybiotinyl-L-lysyl-[protein] + acetyl-CoA = N(6)-biotinyl-L-lysyl-[protein] + malonyl-CoA. It functions in the pathway lipid metabolism; malonyl-CoA biosynthesis; malonyl-CoA from acetyl-CoA: step 1/1. Functionally, component of the acetyl coenzyme A carboxylase (ACC) complex. First, biotin carboxylase catalyzes the carboxylation of biotin on its carrier protein (BCCP) and then the CO(2) group is transferred by the carboxyltransferase to acetyl-CoA to form malonyl-CoA. This is Acetyl-coenzyme A carboxylase carboxyl transferase subunit alpha from Staphylococcus carnosus (strain TM300).